A 712-amino-acid chain; its full sequence is Polyribonucleotide nucleotidyltransferase (712 aa).

Aspartate 487 and aspartate 493 together coordinate Mg(2+). The KH domain maps to 554-613; the sequence is PKIITMTINPDKIRDVIGPSGKQINKIIEETGVKIDIEQDGTVFISSINQEMNDKAKKII. The S1 motif domain maps to 623 to 691; it reads GEIYEAKVKR…KQGRVNLSRK (69 aa).

It belongs to the polyribonucleotide nucleotidyltransferase family. The cofactor is Mg(2+).

The protein localises to the cytoplasm. The catalysed reaction is RNA(n+1) + phosphate = RNA(n) + a ribonucleoside 5'-diphosphate. Its function is as follows. Involved in mRNA degradation. Catalyzes the phosphorolysis of single-stranded polyribonucleotides processively in the 3'- to 5'-direction. This chain is Polyribonucleotide nucleotidyltransferase, found in Bacillus cereus (strain ATCC 14579 / DSM 31 / CCUG 7414 / JCM 2152 / NBRC 15305 / NCIMB 9373 / NCTC 2599 / NRRL B-3711).